We begin with the raw amino-acid sequence, 445 residues long: Histidinol dehydrogenase (445 aa).

Residues Tyr144, Gln205, and Asn228 each contribute to the NAD(+) site. 3 residues coordinate substrate: Ser251, Gln273, and His276. Zn(2+)-binding residues include Gln273 and His276. Active-site proton acceptor residues include Glu341 and His342. Substrate is bound by residues His342, Asp375, Glu429, and His434. Asp375 lines the Zn(2+) pocket. Zn(2+) is bound at residue His434.

It belongs to the histidinol dehydrogenase family. Zn(2+) serves as cofactor.

The catalysed reaction is L-histidinol + 2 NAD(+) + H2O = L-histidine + 2 NADH + 3 H(+). The protein operates within amino-acid biosynthesis; L-histidine biosynthesis; L-histidine from 5-phospho-alpha-D-ribose 1-diphosphate: step 9/9. Its function is as follows. Catalyzes the sequential NAD-dependent oxidations of L-histidinol to L-histidinaldehyde and then to L-histidine. This Cupriavidus pinatubonensis (strain JMP 134 / LMG 1197) (Cupriavidus necator (strain JMP 134)) protein is Histidinol dehydrogenase.